Consider the following 216-residue polypeptide: MOB kinase activator-like 1 homolog C (216 aa).

Residues Cys-78, Cys-83, His-160, and His-165 each coordinate Zn(2+).

It belongs to the MOB1/phocein family.

This Dictyostelium discoideum (Social amoeba) protein is MOB kinase activator-like 1 homolog C (mobC).